The chain runs to 136 residues: Large ribosomal subunit protein eL27 (136 aa).

Residues 5–40 (MKPGKVVMVLAGRYAGRKAVIVKNIDDGTADRPYSH) enclose the KOW domain.

Belongs to the eukaryotic ribosomal protein eL27 family. In terms of assembly, component of the large ribosomal subunit.

It is found in the cytoplasm. Its subcellular location is the cytosol. The protein localises to the rough endoplasmic reticulum. Functionally, component of the large ribosomal subunit. The chain is Large ribosomal subunit protein eL27 (rpl27) from Danio rerio (Zebrafish).